The chain runs to 444 residues: Tubulin beta-7 chain (444 aa).

Gln-11, Glu-69, Ser-138, Gly-142, Thr-143, Gly-144, Asn-204, and Asn-226 together coordinate GTP. Glu-69 serves as a coordination point for Mg(2+).

The protein belongs to the tubulin family. In terms of assembly, dimer of alpha and beta chains. A typical microtubule is a hollow water-filled tube with an outer diameter of 25 nm and an inner diameter of 15 nM. Alpha-beta heterodimers associate head-to-tail to form protofilaments running lengthwise along the microtubule wall with the beta-tubulin subunit facing the microtubule plus end conferring a structural polarity. Microtubules usually have 13 protofilaments but different protofilament numbers can be found in some organisms and specialized cells. The cofactor is Mg(2+). As to expression, expressed in roots, leaf sheaths, and suspension cultured cells.

It localises to the cytoplasm. The protein localises to the cytoskeleton. In terms of biological role, tubulin is the major constituent of microtubules, a cylinder consisting of laterally associated linear protofilaments composed of alpha- and beta-tubulin heterodimers. Microtubules grow by the addition of GTP-tubulin dimers to the microtubule end, where a stabilizing cap forms. Below the cap, tubulin dimers are in GDP-bound state, owing to GTPase activity of alpha-tubulin. The protein is Tubulin beta-7 chain (TUBB7) of Oryza sativa subsp. japonica (Rice).